Reading from the N-terminus, the 311-residue chain is MSVKVKDLLQKVRLQLIYGSEDLLEKEITTSDISRPGLEMTGYFDYYTPERIQLIGMKEWSYLMKMTSHNRHQVLLKMFQPTTPVVIIARDLEIPDEMMQAAQEKQIVILRSHTSTSRLSGEISSYLDSRLAERTSIHGVLMDIYGMGVLIQGDSGIGKSETGLELVKRGHRLVADDRVDIFAKDEMTLWGEPAEILRHLLEIRGVGIIDVMSLYGASAVKDSSQVQIAVYLENYDVNKTFDRLGNASDELEIAGVRIPRVRIPVKTGRNISVVIEAAAMNYRAKEMGFDATKIFEERLTNLISQNEVKHD.

Catalysis depends on residues His138 and Lys159. Residue 153–160 participates in ATP binding; that stretch reads GDSGIGKS. Residue Ser160 participates in Mg(2+) binding. The Proton acceptor; for phosphorylation activity. Proton donor; for dephosphorylation activity role is filled by Asp177. An important for the catalytic mechanism of both phosphorylation and dephosphorylation region spans residues 201–210; it reads LEIRGVGIID. Mg(2+) is bound at residue Glu202. Residue Arg243 is part of the active site. An important for the catalytic mechanism of dephosphorylation region spans residues 264–269; sequence PVKTGR.

It belongs to the HPrK/P family. Homohexamer. Requires Mg(2+) as cofactor.

The catalysed reaction is [HPr protein]-L-serine + ATP = [HPr protein]-O-phospho-L-serine + ADP + H(+). The enzyme catalyses [HPr protein]-O-phospho-L-serine + phosphate + H(+) = [HPr protein]-L-serine + diphosphate. In terms of biological role, catalyzes the ATP- as well as the pyrophosphate-dependent phosphorylation of a specific serine residue in HPr, a phosphocarrier protein of the phosphoenolpyruvate-dependent sugar phosphotransferase system (PTS). HprK/P also catalyzes the pyrophosphate-producing, inorganic phosphate-dependent dephosphorylation (phosphorolysis) of seryl-phosphorylated HPr (P-Ser-HPr). The two antagonistic activities of HprK/P are regulated by several intracellular metabolites, which change their concentration in response to the absence or presence of rapidly metabolisable carbon sources (glucose, fructose, etc.) in the growth medium. Therefore, by controlling the phosphorylation state of HPr, HPrK/P is a sensor enzyme that plays a major role in the regulation of carbon metabolism and sugar transport: it mediates carbon catabolite repression (CCR), and regulates PTS-catalyzed carbohydrate uptake and inducer exclusion. This chain is HPr kinase/phosphorylase, found in Streptococcus gordonii (strain Challis / ATCC 35105 / BCRC 15272 / CH1 / DL1 / V288).